Consider the following 492-residue polypeptide: ATP synthase subunit beta, chloroplastic (492 aa).

Residue 170-177 participates in ATP binding; the sequence is GGAGVGKT.

Belongs to the ATPase alpha/beta chains family. In terms of assembly, F-type ATPases have 2 components, CF(1) - the catalytic core - and CF(0) - the membrane proton channel. CF(1) has five subunits: alpha(3), beta(3), gamma(1), delta(1), epsilon(1). CF(0) has four main subunits: a(1), b(1), b'(1) and c(9-12).

It localises to the plastid. It is found in the chloroplast thylakoid membrane. It catalyses the reaction ATP + H2O + 4 H(+)(in) = ADP + phosphate + 5 H(+)(out). In terms of biological role, produces ATP from ADP in the presence of a proton gradient across the membrane. The catalytic sites are hosted primarily by the beta subunits. This Angiopteris evecta (Mule's foot fern) protein is ATP synthase subunit beta, chloroplastic.